A 140-amino-acid polypeptide reads, in one-letter code: Large ribosomal subunit protein uL16 (140 aa).

The protein belongs to the universal ribosomal protein uL16 family. As to quaternary structure, part of the 50S ribosomal subunit.

Binds 23S rRNA and is also seen to make contacts with the A and possibly P site tRNAs. The polypeptide is Large ribosomal subunit protein uL16 (Amoebophilus asiaticus (strain 5a2)).